Consider the following 356-residue polypeptide: Homoserine O-succinyltransferase (356 aa).

Cys146 serves as the catalytic Acyl-thioester intermediate. The substrate site is built by Lys167 and Ser196. His239 functions as the Proton acceptor in the catalytic mechanism. Glu241 is an active-site residue. Substrate is bound at residue Arg253.

This sequence belongs to the MetA family.

The protein resides in the cytoplasm. It catalyses the reaction L-homoserine + succinyl-CoA = O-succinyl-L-homoserine + CoA. Its pathway is amino-acid biosynthesis; L-methionine biosynthesis via de novo pathway; O-succinyl-L-homoserine from L-homoserine: step 1/1. In terms of biological role, transfers a succinyl group from succinyl-CoA to L-homoserine, forming succinyl-L-homoserine. The chain is Homoserine O-succinyltransferase from Thioalkalivibrio nitratireducens (strain DSM 14787 / UNIQEM 213 / ALEN2).